A 702-amino-acid chain; its full sequence is Mesothelin-like protein (702 aa).

The signal sequence occupies residues 1 to 35 (MAAAVTIPGPRIGALQSSGLTLLLSLAAHCSGPQA). Over 36-638 (KVLSPGGLDA…AQASTSGSLW (603 aa)) the chain is Extracellular. 3 N-linked (GlcNAc...) asparagine glycosylation sites follow: Asn122, Asn307, and Asn424. The disordered stretch occupies residues 588–611 (QLGLDASPTSPTGPAHGTRGPPST). A helical membrane pass occupies residues 639 to 668 (APLGYLPLAMALPCSLLCLLHWGTCILVSV). At 669 to 702 (DSVASGWLGSQGSGAGKTEVLDSAGRPLGLTGQL) the chain is on the cytoplasmic side.

This sequence belongs to the mesothelin family.

The protein resides in the membrane. In terms of biological role, may play a role in cellular adhesion. This is Mesothelin-like protein (MSLNL) from Homo sapiens (Human).